A 302-amino-acid chain; its full sequence is Acetyl-coenzyme A carboxylase carboxyl transferase subunit beta (302 aa).

The CoA carboxyltransferase N-terminal domain maps to 25 to 294; sequence VWTKCDSCGQ…PHFDEAAPVS (270 aa). Residues Cys29, Cys32, Cys48, and Cys51 each contribute to the Zn(2+) site. A C4-type zinc finger spans residues 29–51; sequence CDSCGQVLYRAELERNLEVCPKC. The tract at residues 281–302 is disordered; sequence NQPQPHFDEAAPVSEQENQADA.

The protein belongs to the AccD/PCCB family. As to quaternary structure, acetyl-CoA carboxylase is a heterohexamer composed of biotin carboxyl carrier protein (AccB), biotin carboxylase (AccC) and two subunits each of ACCase subunit alpha (AccA) and ACCase subunit beta (AccD). It depends on Zn(2+) as a cofactor.

The protein localises to the cytoplasm. It catalyses the reaction N(6)-carboxybiotinyl-L-lysyl-[protein] + acetyl-CoA = N(6)-biotinyl-L-lysyl-[protein] + malonyl-CoA. It functions in the pathway lipid metabolism; malonyl-CoA biosynthesis; malonyl-CoA from acetyl-CoA: step 1/1. Component of the acetyl coenzyme A carboxylase (ACC) complex. Biotin carboxylase (BC) catalyzes the carboxylation of biotin on its carrier protein (BCCP) and then the CO(2) group is transferred by the transcarboxylase to acetyl-CoA to form malonyl-CoA. The polypeptide is Acetyl-coenzyme A carboxylase carboxyl transferase subunit beta (Serratia proteamaculans (strain 568)).